The primary structure comprises 124 residues: Small ribosomal subunit protein uS13 (124 aa).

The segment at 95-124 (GLPVRGQRTKTNARTRKGPKRTIAGKKKAR) is disordered.

The protein belongs to the universal ribosomal protein uS13 family. As to quaternary structure, part of the 30S ribosomal subunit. Forms a loose heterodimer with protein S19. Forms two bridges to the 50S subunit in the 70S ribosome.

Functionally, located at the top of the head of the 30S subunit, it contacts several helices of the 16S rRNA. In the 70S ribosome it contacts the 23S rRNA (bridge B1a) and protein L5 of the 50S subunit (bridge B1b), connecting the 2 subunits; these bridges are implicated in subunit movement. Contacts the tRNAs in the A and P-sites. This Mycobacterium avium (strain 104) protein is Small ribosomal subunit protein uS13.